We begin with the raw amino-acid sequence, 126 residues long: Protein ApaG (126 aa).

The region spanning 2 to 126 (RRKPYELKVE…FSLAIPRRLH (125 aa)) is the ApaG domain.

The sequence is that of Protein ApaG from Methylococcus capsulatus (strain ATCC 33009 / NCIMB 11132 / Bath).